Reading from the N-terminus, the 470-residue chain is Neuraminidase (470 aa).

Residues 1–14 lie on the Intravirion side of the membrane; that stretch reads MNPNQKIIAIGSAS. The involved in apical transport and lipid raft association stretch occupies residues 11 to 32; it reads GSASLGILILNVILHVVSIIVT. A helical transmembrane segment spans residues 15 to 35; that stretch reads LGILILNVILHVVSIIVTVLV. The hypervariable stalk region stretch occupies residues 32–86; sequence TVLVLNNNGTGLNCNRTIIREYNETVRVERITQWYNTSTIEYIERPSNEYYMNNT. Residues 36–470 lie on the Virion surface side of the membrane; the sequence is LNNNGTGLNC…AILPFDIDKM (435 aa). 5 N-linked (GlcNAc...) asparagine; by host glycosylation sites follow: N39, N46, N54, N67, and N84. Residues 89-470 are head of neuraminidase; the sequence is LCEAQGFAPF…AILPFDIDKM (382 aa). Disulfide bonds link C90/C417, C122/C127, C182/C229, C231/C236, C277/C290, C279/C288, C316/C335, and C421/C446. Residue R116 participates in substrate binding. An N-linked (GlcNAc...) asparagine; by host glycan is attached at N144. D149 serves as the catalytic Proton donor/acceptor. R150 contacts substrate. 275–276 contacts substrate; that stretch reads EE. Substrate is bound at residue R291. D292 is a Ca(2+) binding site. The N-linked (GlcNAc...) asparagine; by host glycan is linked to N293. G296 and D322 together coordinate Ca(2+). Residue R368 participates in substrate binding. N-linked (GlcNAc...) asparagine; by host glycosylation is present at N398. The active-site Nucleophile is the Y402.

It belongs to the glycosyl hydrolase 34 family. Homotetramer. Ca(2+) is required as a cofactor. N-glycosylated.

The protein resides in the virion membrane. It localises to the host apical cell membrane. It carries out the reaction Hydrolysis of alpha-(2-&gt;3)-, alpha-(2-&gt;6)-, alpha-(2-&gt;8)- glycosidic linkages of terminal sialic acid residues in oligosaccharides, glycoproteins, glycolipids, colominic acid and synthetic substrates.. Its activity is regulated as follows. Inhibited by the neuraminidase inhibitors zanamivir (Relenza) and oseltamivir (Tamiflu). These drugs interfere with the release of progeny virus from infected cells and are effective against all influenza strains. Resistance to neuraminidase inhibitors is quite rare. Functionally, catalyzes the removal of terminal sialic acid residues from viral and cellular glycoconjugates. Cleaves off the terminal sialic acids on the glycosylated HA during virus budding to facilitate virus release. Additionally helps virus spread through the circulation by further removing sialic acids from the cell surface. These cleavages prevent self-aggregation and ensure the efficient spread of the progeny virus from cell to cell. Otherwise, infection would be limited to one round of replication. Described as a receptor-destroying enzyme because it cleaves a terminal sialic acid from the cellular receptors. May facilitate viral invasion of the upper airways by cleaving the sialic acid moieties on the mucin of the airway epithelial cells. Likely to plays a role in the budding process through its association with lipid rafts during intracellular transport. May additionally display a raft-association independent effect on budding. Plays a role in the determination of host range restriction on replication and virulence. Sialidase activity in late endosome/lysosome traffic seems to enhance virus replication. In Aves (Horse), this protein is Neuraminidase.